The chain runs to 475 residues: Aspartyl/glutamyl-tRNA(Asn/Gln) amidotransferase subunit B (475 aa).

It belongs to the GatB/GatE family. GatB subfamily. Heterotrimer of A, B and C subunits.

The catalysed reaction is L-glutamyl-tRNA(Gln) + L-glutamine + ATP + H2O = L-glutaminyl-tRNA(Gln) + L-glutamate + ADP + phosphate + H(+). The enzyme catalyses L-aspartyl-tRNA(Asn) + L-glutamine + ATP + H2O = L-asparaginyl-tRNA(Asn) + L-glutamate + ADP + phosphate + 2 H(+). Its function is as follows. Allows the formation of correctly charged Asn-tRNA(Asn) or Gln-tRNA(Gln) through the transamidation of misacylated Asp-tRNA(Asn) or Glu-tRNA(Gln) in organisms which lack either or both of asparaginyl-tRNA or glutaminyl-tRNA synthetases. The reaction takes place in the presence of glutamine and ATP through an activated phospho-Asp-tRNA(Asn) or phospho-Glu-tRNA(Gln). The sequence is that of Aspartyl/glutamyl-tRNA(Asn/Gln) amidotransferase subunit B from Thermoanaerobacter sp. (strain X514).